Reading from the N-terminus, the 216-residue chain is Cytosolic-abundant heat soluble protein 2 (216 aa).

Positions 1–11 (MSRDQGSTEYD) are enriched in polar residues. Disordered stretches follow at residues 1-34 (MSRD…DVRT) and 66-91 (RISG…KDRE). Positions 12–22 (ANQRQEQHQEQ) are enriched in basic and acidic residues. Polar residues-rich tracts occupy residues 25 to 34 (TSYTHTDVRT) and 68 to 77 (SGQSSETHVQ). A coiled-coil region spans residues 81 to 180 (EMEAEARKDR…ARLATQALDQ (100 aa)). CAHS motif regions lie at residues 115-133 (YRKQ…LEKQ) and 152-170 (QKRQ…LDRE).

It belongs to the Cytosolic-abundant heat soluble protein (CAHS) family.

It is found in the cytoplasm. CAHS proteins are cytosolic heat soluble proteins that seem to contribute to the anhydrobiosis in tardigrades, but their specific mechanisms are yet to be identified. It is possible that protection during anhydrobiosis might occur via the stabilization of vitrifying small molecules such as sugars, but not via the direct glass transition of CAHS proteins themselves. The sequence is that of Cytosolic-abundant heat soluble protein 2 from Ramazzottius varieornatus (Water bear).